A 552-amino-acid polypeptide reads, in one-letter code: Cytochrome c oxidase subunit 1 (552 aa).

A helical transmembrane segment spans residues 35–55 (VIGIQYLVTAFIFYLIGGLMA). His-82 serves as a coordination point for Fe(II)-heme a. The next 6 helical transmembrane spans lie at 85-105 (IMIFLWVVPAAIGGFGNYLVP), 120-140 (ALAFWLNPPAGALLLASFLFG), 164-184 (WILAIILVGTSSILGSVNFIV), 211-231 (LLALVSTPVLAAGLILLLFDI), 252-272 (LFWFYSHPAVYLMILPIFGIM), and 284-304 (IFGYQAIAYSSLAICCVGLFV). Positions 258 and 262 each coordinate Cu cation. The 1'-histidyl-3'-tyrosine (His-Tyr) cross-link spans 258–262 (HPAVY). Residues His-307 and His-308 each contribute to the Cu cation site. Helical transmembrane passes span 321-341 (FFTISTLIVAVPTGVKIFSWV), 355-375 (MLFAIGLMSMFVLGGLSGVTL), 390-410 (VVAHFHYVLFGGSVFGLYAGI), 426-446 (LGILHFVLTLIGTNWTFLPMH), and 470-490 (ICTIGAFVLAFSIIPFLINII). His-393 contributes to the heme a3 binding site. His-395 provides a ligand contact to Fe(II)-heme a.

The protein belongs to the heme-copper respiratory oxidase family. Cu(2+) serves as cofactor. Requires heme as cofactor.

The protein resides in the cell membrane. It catalyses the reaction 4 Fe(II)-[cytochrome c] + O2 + 8 H(+)(in) = 4 Fe(III)-[cytochrome c] + 2 H2O + 4 H(+)(out). It participates in energy metabolism; oxidative phosphorylation. Cytochrome c oxidase is the component of the respiratory chain that catalyzes the reduction of oxygen to water. Subunits 1-3 form the functional core of the enzyme complex. CO I is the catalytic subunit of the enzyme. Electrons originating in cytochrome c are transferred via the copper A center of subunit 2 and heme A of subunit 1 to the bimetallic center formed by heme A3 and copper B. This is Cytochrome c oxidase subunit 1 (ctaD) from Thermostichus vulcanus (Synechococcus vulcanus).